We begin with the raw amino-acid sequence, 636 residues long: 1-deoxy-D-xylulose-5-phosphate synthase (636 aa).

Thiamine diphosphate-binding positions include His72 and 113 to 115; that span reads GHA. Asp144 lines the Mg(2+) pocket. Thiamine diphosphate is bound by residues 145–146, Asn174, Tyr287, and Glu370; that span reads GA. Asn174 provides a ligand contact to Mg(2+).

The protein belongs to the transketolase family. DXPS subfamily. Homodimer. The cofactor is Mg(2+). It depends on thiamine diphosphate as a cofactor.

It catalyses the reaction D-glyceraldehyde 3-phosphate + pyruvate + H(+) = 1-deoxy-D-xylulose 5-phosphate + CO2. It participates in metabolic intermediate biosynthesis; 1-deoxy-D-xylulose 5-phosphate biosynthesis; 1-deoxy-D-xylulose 5-phosphate from D-glyceraldehyde 3-phosphate and pyruvate: step 1/1. In terms of biological role, catalyzes the acyloin condensation reaction between C atoms 2 and 3 of pyruvate and glyceraldehyde 3-phosphate to yield 1-deoxy-D-xylulose-5-phosphate (DXP). The chain is 1-deoxy-D-xylulose-5-phosphate synthase from Rippkaea orientalis (strain PCC 8801 / RF-1) (Cyanothece sp. (strain PCC 8801)).